A 456-amino-acid chain; its full sequence is tRNA-2-methylthio-N(6)-dimethylallyladenosine synthase (456 aa).

Residues Lys-17 to Glu-135 enclose the MTTase N-terminal domain. 6 residues coordinate [4Fe-4S] cluster: Cys-26, Cys-62, Cys-96, Cys-172, Cys-176, and Cys-179. Residues Arg-158–Glu-387 enclose the Radical SAM core domain. A TRAM domain is found at Gln-390–Pro-453.

The protein belongs to the methylthiotransferase family. MiaB subfamily. Monomer. It depends on [4Fe-4S] cluster as a cofactor.

Its subcellular location is the cytoplasm. The enzyme catalyses N(6)-dimethylallyladenosine(37) in tRNA + (sulfur carrier)-SH + AH2 + 2 S-adenosyl-L-methionine = 2-methylsulfanyl-N(6)-dimethylallyladenosine(37) in tRNA + (sulfur carrier)-H + 5'-deoxyadenosine + L-methionine + A + S-adenosyl-L-homocysteine + 2 H(+). Catalyzes the methylthiolation of N6-(dimethylallyl)adenosine (i(6)A), leading to the formation of 2-methylthio-N6-(dimethylallyl)adenosine (ms(2)i(6)A) at position 37 in tRNAs that read codons beginning with uridine. The sequence is that of tRNA-2-methylthio-N(6)-dimethylallyladenosine synthase from Desulforamulus reducens (strain ATCC BAA-1160 / DSM 100696 / MI-1) (Desulfotomaculum reducens).